We begin with the raw amino-acid sequence, 285 residues long: Bifunctional protein FolD (285 aa).

NADP(+) is bound by residues 166 to 168 and Ile-232; that span reads GAS.

This sequence belongs to the tetrahydrofolate dehydrogenase/cyclohydrolase family. Homodimer.

It catalyses the reaction (6R)-5,10-methylene-5,6,7,8-tetrahydrofolate + NADP(+) = (6R)-5,10-methenyltetrahydrofolate + NADPH. The catalysed reaction is (6R)-5,10-methenyltetrahydrofolate + H2O = (6R)-10-formyltetrahydrofolate + H(+). The protein operates within one-carbon metabolism; tetrahydrofolate interconversion. Catalyzes the oxidation of 5,10-methylenetetrahydrofolate to 5,10-methenyltetrahydrofolate and then the hydrolysis of 5,10-methenyltetrahydrofolate to 10-formyltetrahydrofolate. In Buchnera aphidicola subsp. Schizaphis graminum (strain Sg), this protein is Bifunctional protein FolD.